A 163-amino-acid polypeptide reads, in one-letter code: Putative pre-16S rRNA nuclease (163 aa).

The protein belongs to the YqgF nuclease family.

It is found in the cytoplasm. Functionally, could be a nuclease involved in processing of the 5'-end of pre-16S rRNA. In Nitrobacter hamburgensis (strain DSM 10229 / NCIMB 13809 / X14), this protein is Putative pre-16S rRNA nuclease.